The sequence spans 648 residues: Macrolide export ATP-binding/permease protein MacB (648 aa).

Residues 5–243 (LELCNVSRSY…QGVDAAVVNT (239 aa)) form the ABC transporter domain. 41–48 (GVSGSGKS) contacts ATP. 5 helical membrane passes run 273–293 (LLTM…VVVG), 417–437 (ANVV…IGVA), 523–543 (LFLT…VMNI), 577–597 (VLVC…IAFM), and 611–631 (LTAL…FGWL).

This sequence belongs to the ABC transporter superfamily. Macrolide exporter (TC 3.A.1.122) family. In terms of assembly, homodimer. Part of the tripartite efflux system MacAB-TolC, which is composed of an inner membrane transporter, MacB, a periplasmic membrane fusion protein, MacA, and an outer membrane component, TolC. The complex forms a large protein conduit and can translocate molecules across both the inner and outer membranes. Interacts with MacA.

The protein localises to the cell inner membrane. In terms of biological role, part of the tripartite efflux system MacAB-TolC. MacB is a non-canonical ABC transporter that contains transmembrane domains (TMD), which form a pore in the inner membrane, and an ATP-binding domain (NBD), which is responsible for energy generation. Confers resistance against macrolides. The chain is Macrolide export ATP-binding/permease protein MacB from Salmonella choleraesuis (strain SC-B67).